The sequence spans 581 residues: Trehalase (581 aa).

This sequence belongs to the glycosyl hydrolase 15 family. In terms of assembly, monomer.

It catalyses the reaction alpha,alpha-trehalose + H2O = alpha-D-glucose + beta-D-glucose. It functions in the pathway glycan degradation; trehalose degradation; D-glucose from alpha,alpha-trehalose: step 1/1. Inhibited by validamycin A. Catalyzes the hydrolysis of alpha,alpha-trehalose into two molecules of D-glucose. In Thermoplasma acidophilum (strain ATCC 25905 / DSM 1728 / JCM 9062 / NBRC 15155 / AMRC-C165), this protein is Trehalase.